Consider the following 455-residue polypeptide: Nuclear mRNA export protein THP1 (455 aa).

Residues 220–431 (IEYRYLLGRY…QLCVVKKTTM (212 aa)) form the PCI domain.

Heterodimer with THP1. The SAC3-THP1 complex interacts with CDC31 and SUS1, and with the mRNA export factor MEX67-MTR2, the TREX complex component SUB2, and the nucleoporin NUP1.

It localises to the nucleus envelope. Functionally, component of the SAC3-THP1 complex, which functions in transcription-coupled mRNA export from the nucleus to the cytoplasm. SAC3-THP1 functions in docking export-competent ribonucleoprotein particles (mRNPs) to the nuclear entrance of the nuclear pore complex (nuclear basket), by association with components of the nuclear mRNA export machinery (MEX67-MTR2 and SUB2) in the nucleoplasm and the nucleoporin NUP1 at the nuclear basket. THP1 binds to RNA in vitro. This chain is Nuclear mRNA export protein THP1 (THP1), found in Saccharomyces cerevisiae (strain ATCC 204508 / S288c) (Baker's yeast).